The primary structure comprises 274 residues: Thiamine kinase (274 aa).

It belongs to the thiamine kinase family.

The catalysed reaction is thiamine + ATP = thiamine phosphate + ADP + H(+). It participates in cofactor biosynthesis; thiamine diphosphate biosynthesis; thiamine phosphate from thiamine: step 1/1. Functionally, catalyzes the ATP-dependent phosphorylation of thiamine to thiamine phosphate. Is involved in thiamine salvage. The polypeptide is Thiamine kinase (Escherichia coli O81 (strain ED1a)).